Here is a 341-residue protein sequence, read N- to C-terminus: MMKHVLNKCLMGESLSVQEAEQVMEQIMSGRATASQVASLITMMRVRGETAEEILGFAKGMRAYARKFPAVIEGTIDTCGTGGDGLGTFNISTASALVLASLGVPVAKHGNRSVSSKSGSADVLEELGINIQASVEEACQMLETTNLCFLFAPLYHQSMRHVAGPRKEIGFRTIFNLLGPLTNPAGARYQLLGVYDEAAALKMGEALRQLGSEHSLLVTGADGLDECAIHGDTHVVEVKDGRCETYRFSPDDVGLPLGNLADIQVDTPAESAALIRAIFSGDGPQAAKNIVALNAGAALYACGNASHIAEGVHYASKAIESKRVFRYLQSLQQQGRGIKHA.

Residues Gly80, 83–84 (GD), Thr88, 90–93 (NIST), 108–116 (KHGNRSVSS), and Ser120 contribute to the 5-phospho-alpha-D-ribose 1-diphosphate site. Gly80 is a binding site for anthranilate. Position 92 (Ser92) interacts with Mg(2+). Asn111 contacts anthranilate. An anthranilate-binding site is contributed by Arg166. Residues Asp225 and Glu226 each coordinate Mg(2+).

This sequence belongs to the anthranilate phosphoribosyltransferase family. As to quaternary structure, homodimer. Mg(2+) is required as a cofactor.

The enzyme catalyses N-(5-phospho-beta-D-ribosyl)anthranilate + diphosphate = 5-phospho-alpha-D-ribose 1-diphosphate + anthranilate. The protein operates within amino-acid biosynthesis; L-tryptophan biosynthesis; L-tryptophan from chorismate: step 2/5. In terms of biological role, catalyzes the transfer of the phosphoribosyl group of 5-phosphorylribose-1-pyrophosphate (PRPP) to anthranilate to yield N-(5'-phosphoribosyl)-anthranilate (PRA). In Shouchella clausii (strain KSM-K16) (Alkalihalobacillus clausii), this protein is Anthranilate phosphoribosyltransferase.